The following is a 307-amino-acid chain: N-acetylmuramic acid 6-phosphate etherase (307 aa).

One can recognise an SIS domain in the interval 57 to 220; the sequence is IIEAFKTNGR…TTASMIGVGK (164 aa). The active-site Proton donor is the glutamate 85. Glutamate 116 is a catalytic residue.

Belongs to the GCKR-like family. MurNAc-6-P etherase subfamily. In terms of assembly, homodimer.

The catalysed reaction is N-acetyl-D-muramate 6-phosphate + H2O = N-acetyl-D-glucosamine 6-phosphate + (R)-lactate. Its pathway is amino-sugar metabolism; N-acetylmuramate degradation. In terms of biological role, specifically catalyzes the cleavage of the D-lactyl ether substituent of MurNAc 6-phosphate, producing GlcNAc 6-phosphate and D-lactate. This chain is N-acetylmuramic acid 6-phosphate etherase, found in Alkaliphilus metalliredigens (strain QYMF).